The following is a 1555-amino-acid chain: Protein TASOR (1555 aa).

Disordered regions lie at residues 1–74 (MEEN…DKRA), 645–711 (QKKK…RQET), 744–773 (QNST…GQDQ), 870–911 (ALPN…TTPS), and 1390–1462 (NQGD…PTLD). Residues 35-47 (VQQTLKRTNSTES) are compositionally biased toward polar residues. Residues 61–71 (RRFQIPRKSRD) show a composition bias toward basic residues. A compositionally biased stretch (basic and acidic residues) spans 667-688 (DRQSEKAWKHRKCEENVHHDNE). 2 stretches are compositionally biased toward polar residues: residues 692-702 (SAQSLISSLGG) and 744-761 (QNST…LSQA). Basic and acidic residues predominate over residues 888 to 904 (PLHETERQRPRHDRDYC). The segment covering 1402–1417 (SKEEEDMSLDSEDDTP) has biased composition (acidic residues). Positions 1448–1458 (ESPSTLNQGKT) are enriched in polar residues.

The protein belongs to the TASOR family. As to quaternary structure, component of the HUSH complex.

The protein resides in the nucleus. Its subcellular location is the chromosome. Component of the HUSH complex, a multiprotein complex that mediates epigenetic repression. The HUSH complex is recruited to genomic loci rich in H3K9me3 and is probably required to maintain transcriptional silencing by promoting further deposition of H3K9me3. This Xenopus laevis (African clawed frog) protein is Protein TASOR.